The following is a 463-amino-acid chain: Argininosuccinate lyase (463 aa).

This sequence belongs to the lyase 1 family. Argininosuccinate lyase subfamily.

The protein resides in the cytoplasm. It carries out the reaction 2-(N(omega)-L-arginino)succinate = fumarate + L-arginine. It participates in amino-acid biosynthesis; L-arginine biosynthesis; L-arginine from L-ornithine and carbamoyl phosphate: step 3/3. In Staphylococcus epidermidis (strain ATCC 35984 / DSM 28319 / BCRC 17069 / CCUG 31568 / BM 3577 / RP62A), this protein is Argininosuccinate lyase.